The chain runs to 437 residues: Citrate synthase (437 aa).

Residues His-316 and Asp-372 contribute to the active site.

This sequence belongs to the citrate synthase family. In terms of assembly, homohexamer.

It carries out the reaction oxaloacetate + acetyl-CoA + H2O = citrate + CoA + H(+). It functions in the pathway carbohydrate metabolism; tricarboxylic acid cycle; isocitrate from oxaloacetate: step 1/2. Its activity is regulated as follows. Weakly inhibited by ATP (apparent Ki = 10 mm). The sequence is that of Citrate synthase (gltA) from Corynebacterium glutamicum (strain ATCC 13032 / DSM 20300 / JCM 1318 / BCRC 11384 / CCUG 27702 / LMG 3730 / NBRC 12168 / NCIMB 10025 / NRRL B-2784 / 534).